Reading from the N-terminus, the 296-residue chain is Co-chaperone protein DjlA (296 aa).

The Periplasmic portion of the chain corresponds to 1 to 15 (MNLRDFFVITTWWGK). Residues 16-39 (ILGAFFGYLTAGPVGALFGILVGN) traverse the membrane as a helical segment. Topologically, residues 40 to 296 (FFDRGLVSYY…YELICETKGW (257 aa)) are cytoplasmic. A disordered region spans residues 200–225 (QHYHNQQEYKHTSSSQGQQGYKPQSP). Residues 211–221 (TSSSQGQQGYK) show a composition bias toward polar residues. In terms of domain architecture, J spans 231–296 (HAFALLEVSP…YELICETKGW (66 aa)).

In terms of assembly, homodimer.

It is found in the cell inner membrane. In terms of biological role, regulatory DnaK co-chaperone. Direct interaction between DnaK and DjlA is needed for the induction of the wcaABCDE operon, involved in the synthesis of a colanic acid polysaccharide capsule, possibly through activation of the RcsB/RcsC phosphotransfer signaling pathway. The colanic acid capsule may help the bacterium survive conditions outside the host. The polypeptide is Co-chaperone protein DjlA (Legionella pneumophila subsp. pneumophila (strain Philadelphia 1 / ATCC 33152 / DSM 7513)).